The primary structure comprises 640 residues: Glutamyl-tRNA(Gln) amidotransferase subunit E (640 aa).

Belongs to the GatB/GatE family. GatE subfamily. As to quaternary structure, heterodimer of GatD and GatE.

It catalyses the reaction L-glutamyl-tRNA(Gln) + L-glutamine + ATP + H2O = L-glutaminyl-tRNA(Gln) + L-glutamate + ADP + phosphate + H(+). Its function is as follows. Allows the formation of correctly charged Gln-tRNA(Gln) through the transamidation of misacylated Glu-tRNA(Gln) in organisms which lack glutaminyl-tRNA synthetase. The reaction takes place in the presence of glutamine and ATP through an activated gamma-phospho-Glu-tRNA(Gln). The GatDE system is specific for glutamate and does not act on aspartate. This chain is Glutamyl-tRNA(Gln) amidotransferase subunit E, found in Methanopyrus kandleri (strain AV19 / DSM 6324 / JCM 9639 / NBRC 100938).